Reading from the N-terminus, the 130-residue chain is Small ribosomal subunit protein uS11 (130 aa).

Belongs to the universal ribosomal protein uS11 family. As to quaternary structure, part of the 30S ribosomal subunit. Interacts with proteins S7 and S18. Binds to IF-3.

Its function is as follows. Located on the platform of the 30S subunit, it bridges several disparate RNA helices of the 16S rRNA. Forms part of the Shine-Dalgarno cleft in the 70S ribosome. This is Small ribosomal subunit protein uS11 from Shewanella violacea (strain JCM 10179 / CIP 106290 / LMG 19151 / DSS12).